A 177-amino-acid chain; its full sequence is Large ribosomal subunit protein uL6 (177 aa).

It belongs to the universal ribosomal protein uL6 family. As to quaternary structure, part of the 50S ribosomal subunit.

Its function is as follows. This protein binds to the 23S rRNA, and is important in its secondary structure. It is located near the subunit interface in the base of the L7/L12 stalk, and near the tRNA binding site of the peptidyltransferase center. This is Large ribosomal subunit protein uL6 from Photobacterium profundum (strain SS9).